Here is an 886-residue protein sequence, read N- to C-terminus: DNA mismatch repair protein MutS (886 aa).

626–633 provides a ligand contact to ATP; sequence GPNMGGKS.

The protein belongs to the DNA mismatch repair MutS family.

Functionally, this protein is involved in the repair of mismatches in DNA. It is possible that it carries out the mismatch recognition step. This protein has a weak ATPase activity. In Burkholderia ambifaria (strain ATCC BAA-244 / DSM 16087 / CCUG 44356 / LMG 19182 / AMMD) (Burkholderia cepacia (strain AMMD)), this protein is DNA mismatch repair protein MutS.